The sequence spans 584 residues: uncharacterized protein (584 aa).

Residues 1–27 form the signal peptide; that stretch reads MGLSRKKIFTWPLLLTGMAVVSTTFSS. Residue cysteine 28 is the site of N-palmitoyl cysteine attachment. The S-diacylglycerol cysteine moiety is linked to residue cysteine 28. The interval 530–570 is disordered; the sequence is NLPKKEGSTNQANQQTNQTNRSTDATKKDSSSDETNKNPLA. Over residues 538–552 the composition is skewed to low complexity; that stretch reads TNQANQQTNQTNRST. The span at 553–565 shows a compositional bias: basic and acidic residues; sequence DATKKDSSSDETN.

The protein belongs to the MG067/MG068/MG395 family.

The protein localises to the cell membrane. This is an uncharacterized protein from Mycoplasmoides gallisepticum (strain R(low / passage 15 / clone 2)) (Mycoplasma gallisepticum).